Here is a 1279-residue protein sequence, read N- to C-terminus: Botulinum-like toxin eBoNT/J (1279 aa).

His-225 lines the Zn(2+) pocket. The active site involves Glu-226. 2 residues coordinate Zn(2+): His-229 and Glu-269. A disulfide bond links Cys-424 and Cys-438. The interval 435 to 843 is translocation domain (TD); that stretch reads LSSCIEILED…RLTSLPVFNL (409 aa). Residues 476 to 525 form a belt; not required for channel formation region; it reads ADTILDSTLSNYDFSKEINFTSTVPIITVEDPLETDEDVPVISEDRTVYV. The N-terminus of receptor binding domain (N-RBD) stretch occupies residues 860–1080; it reads IDIQDSEVLN…EVNRLYWKYF (221 aa). The C-terminus of receptor binding domain (C-RBD) stretch occupies residues 1081–1279; it reads EGSYLRDVWG…IPVDEGWKED (199 aa). Positions 1250–1253 match the Host ganglioside-binding motif motif; sequence SAWY.

This sequence belongs to the peptidase M27 family. Might be a disulfide-linked heterodimer of a light chain (LC) and heavy chain (HC). Requires Zn(2+) as cofactor.

Its subcellular location is the secreted. The protein resides in the host cytoplasm. It is found in the host cytosol. It localises to the host cell membrane. The protein localises to the host cytoplasmic vesicle membrane. The catalysed reaction is Limited hydrolysis of proteins of the neuroexocytosis apparatus, synaptobrevins, SNAP25 or syntaxin. No detected action on small molecule substrates.. In terms of biological role, strongly resembles a botulinum-type toxin, with the appropriate domains and residues to have proteolytic function, although its C-terminus (which binds to a eukaryotic host cell) is different enough from clostrial botulinum toxins that it might bind another cell target. Might be a precursor of a toxin that binds to an unknown eukaryotic cell receptor(s), and be taken up into the host cell via the endocytic pathway. When the pH of the putative toxin-containing endosome drops a structural rearrangement occurs so that the N-terminus of the heavy chain forms pores that allows the light chain to translocate into the cytosol. Once in the cytosol the disulfide bond linking the 2 subunits is reduced and light chain cleaves its target protein. This Enterococcus sp. (strain 3G1_DIV0629) protein is Botulinum-like toxin eBoNT/J.